A 320-amino-acid polypeptide reads, in one-letter code: Phosphate acyltransferase (320 aa).

It belongs to the PlsX family. In terms of assembly, homodimer. Probably interacts with PlsY.

Its subcellular location is the cytoplasm. The enzyme catalyses a fatty acyl-[ACP] + phosphate = an acyl phosphate + holo-[ACP]. The protein operates within lipid metabolism; phospholipid metabolism. In terms of biological role, catalyzes the reversible formation of acyl-phosphate (acyl-PO(4)) from acyl-[acyl-carrier-protein] (acyl-ACP). This enzyme utilizes acyl-ACP as fatty acyl donor, but not acyl-CoA. The sequence is that of Phosphate acyltransferase from Syntrophomonas wolfei subsp. wolfei (strain DSM 2245B / Goettingen).